The primary structure comprises 42 residues: Perlinhibin-related protein (42 aa).

Contains four disulfide bonds.

In terms of biological role, inhibitor of shell growth. The chain is Perlinhibin-related protein from Haliotis laevigata (Smooth Australian abalone).